The sequence spans 312 residues: Olfactory receptor-like protein COR6 (312 aa).

Over 1-26 the chain is Extracellular; sequence MASGNCTTPTTFILSGLTDNPGLQMP. Asn5 carries an N-linked (GlcNAc...) asparagine glycan. A helical transmembrane segment spans residues 27-49; that stretch reads LFMVFLAIYTITLLTNLGLIALI. The Cytoplasmic portion of the chain corresponds to 50 to 57; the sequence is SIDLQLQT. The chain crosses the membrane as a helical span at residues 58–79; it reads PMYIFLQNLSFTDAVYSTVITP. The Extracellular portion of the chain corresponds to 80 to 100; the sequence is KMLATFLEETKTISYVGCILQ. An intrachain disulfide couples Cys97 to Cys179. A helical membrane pass occupies residues 101 to 120; sequence YFSFVLLTVRECLLLAVMAY. Residues 121–139 lie on the Cytoplasmic side of the membrane; that stretch reads DRYAAICKPLLYPAIMTKA. Residues 140–164 form a helical membrane-spanning segment; sequence VCWRLVKGLYSLAFLNFLVHTSGLL. Residues 165 to 205 are Extracellular-facing; the sequence is KLSFCSSNVVNHFFCDNSPLFQISSSSTALNELLVFIFGSL. A helical transmembrane segment spans residues 206–226; sequence FVMSSIITILISYVFIILTVV. The Cytoplasmic portion of the chain corresponds to 227–239; it reads RIRSKERKYKAFS. The chain crosses the membrane as a helical span at residues 240-260; the sequence is TCTSHLMAVSLFHGTIVFMYF. At 261–271 the chain is on the extracellular side; that stretch reads QPANNFSLDKD. A helical transmembrane segment spans residues 272-292; it reads KIMSLFYTVVIPMLNPLIYSW. The Cytoplasmic segment spans residues 293 to 312; sequence RNKEVKDALHRAIATAVLFH.

Belongs to the G-protein coupled receptor 1 family.

The protein resides in the cell membrane. Odorant receptor. The protein is Olfactory receptor-like protein COR6 (COR6) of Gallus gallus (Chicken).